Consider the following 292-residue polypeptide: 4-hydroxy-tetrahydrodipicolinate synthase (292 aa).

T44 is a binding site for pyruvate. Y132 acts as the Proton donor/acceptor in catalysis. The Schiff-base intermediate with substrate role is filled by K161. I203 provides a ligand contact to pyruvate.

It belongs to the DapA family. As to quaternary structure, homotetramer.

The protein resides in the cytoplasm. The catalysed reaction is L-aspartate 4-semialdehyde + pyruvate = (2S,4S)-4-hydroxy-2,3,4,5-tetrahydrodipicolinate + H2O + H(+). It participates in amino-acid biosynthesis; L-lysine biosynthesis via DAP pathway; (S)-tetrahydrodipicolinate from L-aspartate: step 3/4. Is feedback inhibited by lysine. Is competitively inhibited by 2-oxobutyrate with respect to pyruvate. Functionally, catalyzes the condensation of (S)-aspartate-beta-semialdehyde [(S)-ASA] and pyruvate to 4-hydroxy-tetrahydrodipicolinate (HTPA). This is 4-hydroxy-tetrahydrodipicolinate synthase from Rhizobium meliloti (Ensifer meliloti).